We begin with the raw amino-acid sequence, 40 residues long: RNA replication protein (40 aa).

The protein belongs to the potexviruses/carlaviruses RNA replication protein family.

The catalysed reaction is RNA(n) + a ribonucleoside 5'-triphosphate = RNA(n+1) + diphosphate. It carries out the reaction ATP + H2O = ADP + phosphate + H(+). Functionally, RNA replication. The central part of this protein possibly functions as an ATP-binding helicase. The polypeptide is RNA replication protein (Lily symptomless virus (LSV)).